Reading from the N-terminus, the 278-residue chain is 4-deoxy-L-threo-5-hexosulose-uronate ketol-isomerase (278 aa).

The Zn(2+) site is built by H196, H198, E203, and H245.

Belongs to the KduI family. As to quaternary structure, homohexamer. Requires Zn(2+) as cofactor.

It catalyses the reaction 5-dehydro-4-deoxy-D-glucuronate = 3-deoxy-D-glycero-2,5-hexodiulosonate. It functions in the pathway glycan metabolism; pectin degradation; 2-dehydro-3-deoxy-D-gluconate from pectin: step 4/5. Its function is as follows. Catalyzes the isomerization of 5-dehydro-4-deoxy-D-glucuronate to 3-deoxy-D-glycero-2,5-hexodiulosonate. This is 4-deoxy-L-threo-5-hexosulose-uronate ketol-isomerase from Escherichia coli O139:H28 (strain E24377A / ETEC).